Reading from the N-terminus, the 101-residue chain is Gibberellin-regulated protein 6 (101 aa).

A signal peptide spans 1–23; it reads MAKLITSFLLLTILFTFVCLTMS.

This sequence belongs to the GASA family. Six disulfide bonds may be present.

The protein localises to the secreted. Functionally, gibberellin-regulated protein that may function in hormonal controlled steps of development such as seed germination, flowering and seed maturation. The chain is Gibberellin-regulated protein 6 (GASA6) from Arabidopsis thaliana (Mouse-ear cress).